The sequence spans 378 residues: Tyrosinase-like protein phomQ1' (378 aa).

The helical transmembrane segment at 42 to 62 threads the bilayer; sequence TIIVVSVITFAAIIGCWVFLS. Positions 130 and 139 each coordinate Cu cation. N209 is a glycosylation site (N-linked (GlcNAc...) asparagine). Cu cation contacts are provided by H279 and H305.

The protein belongs to the tyrosinase family. It depends on Cu(2+) as a cofactor.

Its subcellular location is the membrane. It participates in mycotoxin biosynthesis. In terms of biological role, tyrosinase-like protein; part of the gene cluster that mediates the biosynthesis of the phomopsins, a group of hexapeptide mycotoxins which infects lupins and causes lupinosis disease in livestock. The pathway starts with the processing of the precursor phomA' by several endopeptidases including kexin proteases as well as the cluster-specific S41 family peptidase phomP1 and the oligopeptidase phomG' to produce 10 identical copies of the hexapeptide Tyr-Val-Ile-Pro-Ile-Asp. After being excised from the precursor peptide, the core peptides are cyclized and modified post-translationally by enzymes encoded within the gene cluster. The timing and order of proteolysis of the phomA' precursor and PTMs are still unknown. Two tyrosinase-like enzymes, phomQ1' and phomQ2, catalyze the chlorination and hydroxylation of Tyr, respectively. PhomYb, is proposed to be involved in the construction of the macrocyclic structure. The other 4 ustYa family proteins may be involved in PTMs that generate the unique structure of phomopsin A. PhomYa' is required for the hydroxylation of C-beta of Tyr. PhomYc', phomYd', and phomYe are responsible for the biosynthesis of 2,3-dehydroisoleucine (dIle), 2,3-dehydroaspartic acid (dAsp), and 3,4-dehydroproline (dPro), respectively. While dIle formation by phomYc' is indispensable for the installation of dAsp by phomYd', the order of the other PTMs have not been elucidated yet. Most of the biosynthetic enzymes likely have broad substrate specificity, and thus, there might be a metabolic grid from a precursor to phomopsin A. The enzyme(s) responsible for the biosynthesis of 3,4-dehydrovaline (dVal) have also not been identified yet. Finally, phomM' acts as an S-adenosylmethionine-dependent alpha-N-methyltransferase that catalyzes two successive N-methylation reactions, converting N-desmethyl-phomopsin A to phomopsin A and phomopsin A further to an N,N-dimethylated congener called phomopsin E. The chain is Tyrosinase-like protein phomQ1' from Diaporthe leptostromiformis (Lupinosis disease fungus).